Here is a 456-residue protein sequence, read N- to C-terminus: Bifunctional protein GlmU (456 aa).

The tract at residues 1–229 (MLNSAMSVVI…ISETDGVNNR (229 aa)) is pyrophosphorylase. Residues 11–14 (LAAG), Lys-25, Gln-76, 81–82 (GT), 103–105 (YGD), Gly-140, Glu-154, Asn-169, and Asn-227 each bind UDP-N-acetyl-alpha-D-glucosamine. Asp-105 contacts Mg(2+). Residue Asn-227 coordinates Mg(2+). The interval 230-250 (LQLSRLERIYQAEQAEKLLLS) is linker. Residues 251 to 456 (GVMLRDPARF…QGWQRPVKKK (206 aa)) are N-acetyltransferase. Arg-333 and Lys-351 together coordinate UDP-N-acetyl-alpha-D-glucosamine. The active-site Proton acceptor is His-363. Residues Tyr-366 and Asn-377 each coordinate UDP-N-acetyl-alpha-D-glucosamine. Residues Ala-380, 386–387 (NY), Ser-405, Ala-423, and Arg-440 contribute to the acetyl-CoA site.

The protein in the N-terminal section; belongs to the N-acetylglucosamine-1-phosphate uridyltransferase family. In the C-terminal section; belongs to the transferase hexapeptide repeat family. In terms of assembly, homotrimer. Mg(2+) serves as cofactor.

The protein resides in the cytoplasm. The enzyme catalyses alpha-D-glucosamine 1-phosphate + acetyl-CoA = N-acetyl-alpha-D-glucosamine 1-phosphate + CoA + H(+). It carries out the reaction N-acetyl-alpha-D-glucosamine 1-phosphate + UTP + H(+) = UDP-N-acetyl-alpha-D-glucosamine + diphosphate. The protein operates within nucleotide-sugar biosynthesis; UDP-N-acetyl-alpha-D-glucosamine biosynthesis; N-acetyl-alpha-D-glucosamine 1-phosphate from alpha-D-glucosamine 6-phosphate (route II): step 2/2. It functions in the pathway nucleotide-sugar biosynthesis; UDP-N-acetyl-alpha-D-glucosamine biosynthesis; UDP-N-acetyl-alpha-D-glucosamine from N-acetyl-alpha-D-glucosamine 1-phosphate: step 1/1. It participates in bacterial outer membrane biogenesis; LPS lipid A biosynthesis. In terms of biological role, catalyzes the last two sequential reactions in the de novo biosynthetic pathway for UDP-N-acetylglucosamine (UDP-GlcNAc). The C-terminal domain catalyzes the transfer of acetyl group from acetyl coenzyme A to glucosamine-1-phosphate (GlcN-1-P) to produce N-acetylglucosamine-1-phosphate (GlcNAc-1-P), which is converted into UDP-GlcNAc by the transfer of uridine 5-monophosphate (from uridine 5-triphosphate), a reaction catalyzed by the N-terminal domain. The chain is Bifunctional protein GlmU from Salmonella heidelberg (strain SL476).